The following is a 381-amino-acid chain: Short-chain dehydrogenase anuD (381 aa).

NADP(+)-binding residues include Ile-84, Lys-109, Asp-133, Asn-158, Tyr-244, and Lys-248. Tyr-244 (proton acceptor) is an active-site residue. Tyr-244 functions as the Proton donor in the catalytic mechanism. Lys-248 acts as the Lowers pKa of active site Tyr in catalysis.

It belongs to the short-chain dehydrogenases/reductases (SDR) family.

Functionally, highly reducing polyketide synthase; part of the gene cluster that mediates the biosynthesis of annullatin D, an alkylated aromatic polyketide with a fused dihydrobenzofuran lactone ring system that exhibits potent agonistic activities toward the cannabinoid receptors. AnuD does not seem to play a role within the pathway. The annullatin backbone 2-hydroxymethyl-3-pentylphenol is assembled from one acetyl-CoA starter unit and 5 malonyl-CoA elongation units by cooperation of the highly reducing polyketide synthase anuA, the short-chain dehydrogenase anuB and the oxidoreductase anuC, before being hydroxylated at the C-5 alkyl chain by the cytochrome P450 monooxygenase anuE to form (8S)-annullatin E. The prenyltransferase anuH subsequently installs one isoprenyl group at the benzene ring to form (8S)-annullatin J. Enzymatic or nonenzymatic dihydro-benzofuran ring formation between the prenyl and the phenolic hydroxyl groups in (8S)-annullatin J results in two diastereomers (2S,9S)-annullatin H and compound 12. The intermediate (2S,9S)-annullatin H is then converted to (2S,9S)-annullatin D by the FAD-linked oxidoreductase anuG-catalyzed five-member lactone ring formation. The isomer 12 acts as a substrate for the short-chain dehydrogenase anuF and is oxidized to (2R)-annullatin F, which is subsequently acetylated by an acetyltransferase leading to (2R)-annullatin G formation. The remaining enzymes identified within the cluster, anuD, anuI and anuJ, seem not to be involved in annullatin biosynthesis. In Penicillium roqueforti (strain FM164), this protein is Short-chain dehydrogenase anuD.